A 245-amino-acid chain; its full sequence is Ribonuclease 3 (245 aa).

Residues 17 to 146 enclose the RNase III domain; sequence FTDKMKSLGL…FVGALYLDQG (130 aa). Glu59 is a binding site for Mg(2+). Residue Asp63 is part of the active site. 2 residues coordinate Mg(2+): Asp132 and Glu135. Glu135 is an active-site residue. A DRBM domain is found at 172–241; it reads DFKTQFQEYV…AEQAYKLMKN (70 aa).

The protein belongs to the ribonuclease III family. In terms of assembly, homodimer. The cofactor is Mg(2+).

The protein localises to the cytoplasm. It carries out the reaction Endonucleolytic cleavage to 5'-phosphomonoester.. In terms of biological role, digests double-stranded RNA. Involved in the processing of primary rRNA transcript to yield the immediate precursors to the large and small rRNAs (23S and 16S). Processes some mRNAs, and tRNAs when they are encoded in the rRNA operon. Processes pre-crRNA and tracrRNA of type II CRISPR loci if present in the organism. This Staphylococcus epidermidis (strain ATCC 12228 / FDA PCI 1200) protein is Ribonuclease 3.